Reading from the N-terminus, the 134-residue chain is Cytochrome b5 (134 aa).

Residues 6–82 (TKTFTRAEVA…MKKYKIGELV (77 aa)) form the Cytochrome b5 heme-binding domain. H41 and H65 together coordinate heme. The segment at 86–105 (RTSVAQKSEPTWSTEQQTEE) is disordered. Residues 87–105 (TSVAQKSEPTWSTEQQTEE) show a composition bias toward polar residues. Residues 111–131 (WLVPLVLCLVATLFYKFFFGG) traverse the membrane as a helical segment.

This sequence belongs to the cytochrome b5 family.

The protein resides in the endoplasmic reticulum membrane. Its subcellular location is the microsome membrane. Cytochrome b5 is a membrane-bound hemoprotein which functions as an electron carrier for several membrane-bound oxygenases. The sequence is that of Cytochrome b5 (Cyt-b5) from Drosophila melanogaster (Fruit fly).